We begin with the raw amino-acid sequence, 185 residues long: Ribosome-recycling factor (185 aa).

Belongs to the RRF family.

Its subcellular location is the cytoplasm. Responsible for the release of ribosomes from messenger RNA at the termination of protein biosynthesis. May increase the efficiency of translation by recycling ribosomes from one round of translation to another. This chain is Ribosome-recycling factor, found in Listeria monocytogenes serovar 1/2a (strain ATCC BAA-679 / EGD-e).